The following is a 298-amino-acid chain: MPDDSRISPLDQARILSEALPHMQRYDEETIVIKYGGHAMGSENVARQFASDIVLLEQTAINPVVVHGGGPQIAAMLQRLGIKSEFAAGLRITDAATIEIVEMVLAGSINKQLVGYINEAGGKAVGLCGKDGNMVTAAKATRMLADPDSNIEKVVDLGFVGEPEKVDLTLLNQLIGHELIPVLAPLATSKGGQTFNVNADIFAGAVAGALKAKRLLLLTDVPGVLDKSKKLIPELSISDARKLIADGTISGGMIPKVETCIYALEQGVSGVVIIDGKTPHAVLLELFTNQGTGTLIHK.

Residues 69 to 70 (GG), arginine 91, and asparagine 196 each bind substrate.

It belongs to the acetylglutamate kinase family. ArgB subfamily.

It localises to the cytoplasm. The catalysed reaction is N-acetyl-L-glutamate + ATP = N-acetyl-L-glutamyl 5-phosphate + ADP. It functions in the pathway amino-acid biosynthesis; L-arginine biosynthesis; N(2)-acetyl-L-ornithine from L-glutamate: step 2/4. Its function is as follows. Catalyzes the ATP-dependent phosphorylation of N-acetyl-L-glutamate. The sequence is that of Acetylglutamate kinase from Nitrobacter winogradskyi (strain ATCC 25391 / DSM 10237 / CIP 104748 / NCIMB 11846 / Nb-255).